Consider the following 305-residue polypeptide: Peroxidase A2 (305 aa).

Gln1 carries the post-translational modification Pyrrolidone carboxylic acid. Residues Asn3 and Asn13 are each glycosylated (N-linked (GlcNAc...) asparagine). 4 cysteine pairs are disulfide-bonded: Cys11-Cys91, Cys44-Cys49, Cys97-Cys299, and Cys176-Cys208. Residue His42 is the Proton acceptor of the active site. Asp43, Val46, Gly48, Asp50, and Ser52 together coordinate Ca(2+). Position 139 (Pro139) interacts with substrate. N-linked (GlcNAc...) asparagine glycosylation occurs at Asn147. His169 provides a ligand contact to heme b. A Ca(2+)-binding site is contributed by Thr170. Asn185, Asn197, and Asn211 each carry an N-linked (GlcNAc...) asparagine glycan. Residues Asp221, Thr224, and Asp229 each contribute to the Ca(2+) site. N-linked (GlcNAc...) asparagine glycosylation is present at Asn267.

Belongs to the peroxidase family. Classical plant (class III) peroxidase subfamily. Ca(2+) serves as cofactor. Heme b is required as a cofactor.

The enzyme catalyses 2 a phenolic donor + H2O2 = 2 a phenolic radical donor + 2 H2O. Functionally, removal of H(2)O(2), oxidation of toxic reductants, biosynthesis and degradation of lignin, suberization, auxin catabolism, response to environmental stresses such as wounding, pathogen attack and oxidative stress. These functions might be dependent on each isozyme/isoform in each plant tissue. This chain is Peroxidase A2 (HRPA2), found in Armoracia rusticana (Horseradish).